The following is a 119-amino-acid chain: Protein TusC (119 aa).

Belongs to the DsrF/TusC family. As to quaternary structure, heterohexamer, formed by a dimer of trimers. The hexameric TusBCD complex contains 2 copies each of TusB, TusC and TusD. The TusBCD complex interacts with TusE.

It is found in the cytoplasm. In terms of biological role, part of a sulfur-relay system required for 2-thiolation of 5-methylaminomethyl-2-thiouridine (mnm(5)s(2)U) at tRNA wobble positions. The sequence is that of Protein TusC from Citrobacter koseri (strain ATCC BAA-895 / CDC 4225-83 / SGSC4696).